A 103-amino-acid polypeptide reads, in one-letter code: N(4)-acetylcytidine amidohydrolase (103 aa).

An ASCH domain is found at 6–101; the sequence is ITFFQRFQDD…QTQFYVIEFK (96 aa). The active-site Proton acceptor is the K21. The active-site Nucleophile is the T24. E74 serves as the catalytic Proton donor.

This sequence belongs to the N(4)-acetylcytidine amidohydrolase family.

The enzyme catalyses N(4)-acetylcytidine + H2O = cytidine + acetate + H(+). It catalyses the reaction N(4)-acetyl-2'-deoxycytidine + H2O = 2'-deoxycytidine + acetate + H(+). The catalysed reaction is N(4)-acetylcytosine + H2O = cytosine + acetate + H(+). Catalyzes the hydrolysis of N(4)-acetylcytidine (ac4C). In Escherichia coli O8 (strain IAI1), this protein is N(4)-acetylcytidine amidohydrolase (yqfB).